The chain runs to 456 residues: Potassium voltage-gated channel subfamily A member 7 (456 aa).

The helical transmembrane segment at 144-164 threads the bilayer; that stretch reads VLAVVSVLVILVSIVVFCLET. An N-linked (GlcNAc...) asparagine glycan is attached at Asn191. Residues 209 to 229 traverse the membrane as a helical segment; sequence FFVVETLCICWFSFELLVRLL. Cys231 carries S-palmitoyl cysteine lipidation. A helical membrane pass occupies residues 241–261; that stretch reads VMNLIDFVAILPYFVALGTEL. Residues 276–295 form a helical; Voltage-sensor membrane-spanning segment; the sequence is ILRVIRLVRVFRIFKLSRHS. Residues 312 to 332 form a helical membrane-spanning segment; the sequence is LGLLIFFLFIGVVLFSSAVYF. The Selectivity filter signature appears at 358–363; the sequence is TVGYGD. A helical transmembrane segment spans residues 373-393; the sequence is IVGSLCAIAGVLTISLPVPVI.

The protein belongs to the potassium channel family. A (Shaker) (TC 1.A.1.2) subfamily. Kv1.7/KCNA7 sub-subfamily. In terms of assembly, heterotetramer of potassium channel proteins. As to expression, highly expressed in skeletal muscle, heart and kidney.

The protein localises to the membrane. It carries out the reaction K(+)(in) = K(+)(out). Functionally, mediates the voltage-dependent potassium ion permeability of excitable membranes. Assuming opened or closed conformations in response to the voltage difference across the membrane, the protein forms a potassium-selective channel through which potassium ions may pass in accordance with their electrochemical gradient. The chain is Potassium voltage-gated channel subfamily A member 7 (KCNA7) from Homo sapiens (Human).